The chain runs to 2028 residues: Phosphatidylinositol 4-kinase alpha 1 (2028 aa).

Positions 184 to 241 are disordered; sequence PASPKEQRQQNSANSETDTSSSQGSPISTNRYPSGKTEMASPGDEVASHGSNLSSKSS. Residues 192 to 215 are compositionally biased toward polar residues; that stretch reads QQNSANSETDTSSSQGSPISTNRY. A compositionally biased stretch (low complexity) spans 231-241; sequence SHGSNLSSKSS. The PIK helical domain occupies 1483–1659; the sequence is TEYAKTAFSV…NAAFQEILPQ (177 aa). The interval 1660–1773 is pleckstrin homology (PH) domain conferring phosphoinositide binding specificity; it reads VRQHIIDGFS…VKPQACIFKV (114 aa). The PI3K/PI4K catalytic domain occupies 1734–2012; it reads VDSGIPLQSA…VCTDAYNKWT (279 aa). Residues 1740 to 1746 are G-loop; the sequence is LQSAAKV. The segment at 1876–1884 is catalytic loop; sequence QPKDRHNGN. An activation loop region spans residues 1895–1920; that stretch reads HIDFGFILETSPGGNMRFESAHFKLS.

Belongs to the PI3/PI4-kinase family. Type III PI4K subfamily. In terms of assembly, interacts in vitro with actin filaments via its PH domain. In terms of tissue distribution, present in leaves and inflorescences.

The protein resides in the membrane. The protein localises to the cytoplasm. It localises to the perinuclear region. It carries out the reaction a 1,2-diacyl-sn-glycero-3-phospho-(1D-myo-inositol) + ATP = a 1,2-diacyl-sn-glycero-3-phospho-(1D-myo-inositol 4-phosphate) + ADP + H(+). Its activity is regulated as follows. Repressed by PtdIns4P, adenosine and wortmannin, but stimulated by other negatively charged lipids such as PtdIns3P, PtdOH, and phosphatidyl-serine (PtdSer). Acts on phosphatidylinositol (PtdIns) in the first committed step in the production of the second messenger inositol-1,4,5,-trisphosphate. Can bind to phosphatidylinositol 4-monophosphate (PI-4-P or PtdIns4P), phosphatidylinositol 4,5-bisphosphate (PI-4,5-P2 or PtdIns4,5P2), and phosphatidic acid (PtdOH), but not to 3-phosphoinositides. May function upstream of the cold response phosphoinositide-dependent phospholipase C (PI-PLC) pathway. In Arabidopsis thaliana (Mouse-ear cress), this protein is Phosphatidylinositol 4-kinase alpha 1.